An 889-amino-acid polypeptide reads, in one-letter code: Alanine--tRNA ligase (889 aa).

The Zn(2+) site is built by histidine 569, histidine 573, cysteine 671, and histidine 675.

It belongs to the class-II aminoacyl-tRNA synthetase family. Zn(2+) is required as a cofactor.

The protein resides in the cytoplasm. It catalyses the reaction tRNA(Ala) + L-alanine + ATP = L-alanyl-tRNA(Ala) + AMP + diphosphate. Catalyzes the attachment of alanine to tRNA(Ala) in a two-step reaction: alanine is first activated by ATP to form Ala-AMP and then transferred to the acceptor end of tRNA(Ala). Also edits incorrectly charged Ser-tRNA(Ala) and Gly-tRNA(Ala) via its editing domain. The sequence is that of Alanine--tRNA ligase from Synechococcus sp. (strain CC9605).